Reading from the N-terminus, the 296-residue chain is Ribosomal RNA small subunit methyltransferase H (296 aa).

S-adenosyl-L-methionine-binding positions include 38–40 (GAH), E57, F80, D103, and H110.

The protein belongs to the methyltransferase superfamily. RsmH family.

Its subcellular location is the cytoplasm. It catalyses the reaction cytidine(1402) in 16S rRNA + S-adenosyl-L-methionine = N(4)-methylcytidine(1402) in 16S rRNA + S-adenosyl-L-homocysteine + H(+). Specifically methylates the N4 position of cytidine in position 1402 (C1402) of 16S rRNA. The protein is Ribosomal RNA small subunit methyltransferase H of Borrelia garinii subsp. bavariensis (strain ATCC BAA-2496 / DSM 23469 / PBi) (Borreliella bavariensis).